Consider the following 108-residue polypeptide: Putative double-stranded DNA mimic protein PBPRA1522 (108 aa).

The protein belongs to the putative dsDNA mimic protein family.

Functionally, may act as a double-stranded DNA (dsDNA) mimic. Probably regulates the activity of a dsDNA-binding protein. This is Putative double-stranded DNA mimic protein PBPRA1522 from Photobacterium profundum (strain SS9).